An 879-amino-acid chain; its full sequence is Alanine--tRNA ligase (879 aa).

His565, His569, Cys674, and His678 together coordinate Zn(2+).

Belongs to the class-II aminoacyl-tRNA synthetase family. The cofactor is Zn(2+).

Its subcellular location is the cytoplasm. The catalysed reaction is tRNA(Ala) + L-alanine + ATP = L-alanyl-tRNA(Ala) + AMP + diphosphate. Its function is as follows. Catalyzes the attachment of alanine to tRNA(Ala) in a two-step reaction: alanine is first activated by ATP to form Ala-AMP and then transferred to the acceptor end of tRNA(Ala). Also edits incorrectly charged Ser-tRNA(Ala) and Gly-tRNA(Ala) via its editing domain. The protein is Alanine--tRNA ligase of Gluconobacter oxydans (strain 621H) (Gluconobacter suboxydans).